The following is a 191-amino-acid chain: Imidazoleglycerol-phosphate dehydratase (191 aa).

Belongs to the imidazoleglycerol-phosphate dehydratase family.

The protein resides in the cytoplasm. The catalysed reaction is D-erythro-1-(imidazol-4-yl)glycerol 3-phosphate = 3-(imidazol-4-yl)-2-oxopropyl phosphate + H2O. The protein operates within amino-acid biosynthesis; L-histidine biosynthesis; L-histidine from 5-phospho-alpha-D-ribose 1-diphosphate: step 6/9. In Thermodesulfovibrio yellowstonii (strain ATCC 51303 / DSM 11347 / YP87), this protein is Imidazoleglycerol-phosphate dehydratase.